Consider the following 276-residue polypeptide: Sulfur carrier protein FdhD (276 aa).

Cysteine 120 serves as the catalytic Cysteine persulfide intermediate.

The protein belongs to the FdhD family.

The protein resides in the cytoplasm. In terms of biological role, required for formate dehydrogenase (FDH) activity. Acts as a sulfur carrier protein that transfers sulfur from IscS to the molybdenum cofactor prior to its insertion into FDH. In Bordetella parapertussis (strain 12822 / ATCC BAA-587 / NCTC 13253), this protein is Sulfur carrier protein FdhD.